The sequence spans 41 residues: Conotoxin Ac4.2 (41 aa).

Residues 1–11 constitute a propeptide that is removed on maturation; sequence FDGRNAAVNER. P13 is modified (4-hydroxyproline). T18 and T20 each carry an O-linked (HexNAc...) threonine glycan. P29 and P33 each carry 4-hydroxyproline. C40 is subject to Cysteine amide.

This sequence belongs to the conotoxin A superfamily. In terms of processing, contains 3 disulfide bonds. Expressed by the venom duct.

The protein resides in the secreted. In terms of biological role, probable neurotoxin with ion channel inhibitor activity. The sequence is that of Conotoxin Ac4.2 from Conus achatinus (Little frog cone).